A 253-amino-acid polypeptide reads, in one-letter code: 1-(5-phosphoribosyl)-5-[(5-phosphoribosylamino)methylideneamino] imidazole-4-carboxamide isomerase (253 aa).

The active-site Proton acceptor is aspartate 11. Aspartate 132 functions as the Proton donor in the catalytic mechanism.

It belongs to the HisA/HisF family.

It is found in the cytoplasm. The enzyme catalyses 1-(5-phospho-beta-D-ribosyl)-5-[(5-phospho-beta-D-ribosylamino)methylideneamino]imidazole-4-carboxamide = 5-[(5-phospho-1-deoxy-D-ribulos-1-ylimino)methylamino]-1-(5-phospho-beta-D-ribosyl)imidazole-4-carboxamide. The protein operates within amino-acid biosynthesis; L-histidine biosynthesis; L-histidine from 5-phospho-alpha-D-ribose 1-diphosphate: step 4/9. The protein is 1-(5-phosphoribosyl)-5-[(5-phosphoribosylamino)methylideneamino] imidazole-4-carboxamide isomerase of Methylobacterium nodulans (strain LMG 21967 / CNCM I-2342 / ORS 2060).